The primary structure comprises 232 residues: Clarin-2 (232 aa).

4 helical membrane-spanning segments follow: residues 8 to 28, 101 to 121, 139 to 159, and 188 to 208; these read VWYGLASLLSFSSFLLIIVAL, ILLLLFLALALALVSMGFAIL, LWNVLAGGVVALAIGSFMAAV, and SFWICVASASAHAANLVVVAI.

The protein belongs to the clarin family. As to expression, detected in inner ear, particularly in hair bundles of auditory hair cells and is enriched in apical stereocilia. Detected in eye, but not in brain or muscle.

The protein resides in the cell projection. Its subcellular location is the stereocilium membrane. Plays a key role to hearing function. Required for normal organization and maintenance of the stereocilia bundle and for mechano-electrical transduction. This chain is Clarin-2, found in Mus musculus (Mouse).